Reading from the N-terminus, the 240-residue chain is 1-(5-phosphoribosyl)-5-[(5-phosphoribosylamino)methylideneamino] imidazole-4-carboxamide isomerase (240 aa).

Aspartate 8 functions as the Proton acceptor in the catalytic mechanism. The Proton donor role is filled by aspartate 130.

It belongs to the HisA/HisF family.

It localises to the cytoplasm. The enzyme catalyses 1-(5-phospho-beta-D-ribosyl)-5-[(5-phospho-beta-D-ribosylamino)methylideneamino]imidazole-4-carboxamide = 5-[(5-phospho-1-deoxy-D-ribulos-1-ylimino)methylamino]-1-(5-phospho-beta-D-ribosyl)imidazole-4-carboxamide. It functions in the pathway amino-acid biosynthesis; L-histidine biosynthesis; L-histidine from 5-phospho-alpha-D-ribose 1-diphosphate: step 4/9. The protein is 1-(5-phosphoribosyl)-5-[(5-phosphoribosylamino)methylideneamino] imidazole-4-carboxamide isomerase of Elusimicrobium minutum (strain Pei191).